Reading from the N-terminus, the 264-residue chain is Apolipoprotein A-I (264 aa).

An N-terminal signal peptide occupies residues 1 to 18 (MKAVVLALAVLFLTGSQA). 2 tandem repeats follow at residues 67 to 88 (LHLL…EQLG) and 89 to 110 (PVTH…QEMN). Residues 67 to 264 (LHLLDNWDTL…DEASKKLNAQ (198 aa)) are 10 X approximate tandem repeats. The residue at position 109 (Met109) is a Methionine sulfoxide. Residues 111-121 (KDLEEVKVKVQ) form a 3; half-length repeat. Tandem repeats lie at residues 122-143 (PYLD…EKVG), 144-165 (PLGA…EKLT), 166-187 (PLGE…TQLA), 188-207 (PYSD…IRDS), and 208-229 (PSLA…EKAK). One copy of the 9; half-length repeat lies at 230 to 240 (PALEDLRQGLM). Repeat 10 spans residues 241–264 (PVLENLKTTVLAAIDEASKKLNAQ).

It belongs to the apolipoprotein A1/A4/E family. Homodimer. Interacts with APOA1BP and CLU. Component of a sperm activating protein complex (SPAP), consisting of APOA1, an immunoglobulin heavy chain, an immunoglobulin light chain and albumin. Interacts with NDRG1. Interacts with SCGB3A2. Interacts with NAXE and YJEFN3. Glycosylated. In terms of processing, palmitoylated. Post-translationally, phosphorylation sites are present in the extracellular medium.

Its subcellular location is the secreted. Functionally, participates in the reverse transport of cholesterol from tissues to the liver for excretion by promoting cholesterol efflux from tissues and by acting as a cofactor for the lecithin cholesterol acyltransferase (LCAT). As part of the SPAP complex, activates spermatozoa motility. The protein is Apolipoprotein A-I (APOA1) of Jaculus jaculus (Lesser Egyptian jerboa).